Consider the following 944-residue polypeptide: Valine--tRNA ligase (944 aa).

The 'HIGH' region signature appears at 43 to 53 (PNVTGTLHMGH). The 'KMSKS' region motif lies at 550–554 (KMSKS). Lys553 provides a ligand contact to ATP. Residues 878–944 (LVDMDAERTR…TGLREQRAKL (67 aa)) are a coiled coil.

The protein belongs to the class-I aminoacyl-tRNA synthetase family. ValS type 1 subfamily. In terms of assembly, monomer.

The protein resides in the cytoplasm. The catalysed reaction is tRNA(Val) + L-valine + ATP = L-valyl-tRNA(Val) + AMP + diphosphate. In terms of biological role, catalyzes the attachment of valine to tRNA(Val). As ValRS can inadvertently accommodate and process structurally similar amino acids such as threonine, to avoid such errors, it has a 'posttransfer' editing activity that hydrolyzes mischarged Thr-tRNA(Val) in a tRNA-dependent manner. This is Valine--tRNA ligase from Xanthomonas campestris pv. campestris (strain B100).